The primary structure comprises 592 residues: Threonine dehydratase biosynthetic, chloroplastic (592 aa).

Residues 1-91 (MNSVQLPTAQ…NEAENGSIAE (91 aa)) constitute a chloroplast transit peptide. Lysine 141 bears the N6-(pyridoxal phosphate)lysine mark. 2 consecutive ACT-like domains span residues 419–490 (AVLA…NLTT) and 512–583 (VLCR…LVSD).

This sequence belongs to the serine/threonine dehydratase family. It depends on pyridoxal 5'-phosphate as a cofactor.

It localises to the plastid. The protein resides in the chloroplast. It catalyses the reaction L-threonine = 2-oxobutanoate + NH4(+). The protein operates within amino-acid biosynthesis; L-isoleucine biosynthesis; 2-oxobutanoate from L-threonine: step 1/1. Allosterically inhibited by isoleucine. Strain GM11b is isoleucine feedback insensitive and is resistant to the antimetabolite L-O-methylthreonine. Functionally, catalyzes the formation of alpha-ketobutyrate from threonine in a two-step reaction. The first step is a dehydration of threonine, followed by rehydration and liberation of ammonia. This Arabidopsis thaliana (Mouse-ear cress) protein is Threonine dehydratase biosynthetic, chloroplastic (OMR1).